An 800-amino-acid polypeptide reads, in one-letter code: Nucleolar complex protein 3 homolog (800 aa).

Positions 37-90 (STIKKYRKEQRKLRQAVKDAVSKKPFPLEDPKSKRPVKGMEREEEDEEDQALPL) are disordered. Residues 40–51 (KKYRKEQRKLRQ) are compositionally biased toward basic residues. The span at 52 to 77 (AVKDAVSKKPFPLEDPKSKRPVKGME) shows a compositional bias: basic and acidic residues. Over residues 78 to 90 (REEEDEEDQALPL) the composition is skewed to acidic residues. A Glycyl lysine isopeptide (Lys-Gly) (interchain with G-Cter in SUMO2) cross-link involves residue lysine 333. Residues 450 to 489 (FKEKRKTLSRMQRKWKKAEEKLERELREAEASESTERKLK) are a coiled coil.

The protein belongs to the CBF/MAK21 family.

The protein localises to the nucleus. The protein resides in the nucleolus. The polypeptide is Nucleolar complex protein 3 homolog (NOC3L) (Cricetulus griseus (Chinese hamster)).